The chain runs to 481 residues: Ribulose bisphosphate carboxylase large chain (481 aa).

A propeptide spanning residues M1–S2 is cleaved from the precursor. P3 bears the N-acetylproline mark. K14 is modified (N6,N6,N6-trimethyllysine). Substrate is bound by residues N123 and T173. Catalysis depends on K175, which acts as the Proton acceptor. K177 is a binding site for substrate. Residues K201, D203, and E204 each coordinate Mg(2+). Residue K201 is modified to N6-carboxylysine. The Proton acceptor role is filled by H294. Substrate-binding residues include R295, H327, and S379.

Belongs to the RuBisCO large chain family. Type I subfamily. As to quaternary structure, heterohexadecamer of 8 large chains and 8 small chains; disulfide-linked. The disulfide link is formed within the large subunit homodimers. Requires Mg(2+) as cofactor. The disulfide bond which can form in the large chain dimeric partners within the hexadecamer appears to be associated with oxidative stress and protein turnover.

The protein localises to the plastid. It carries out the reaction 2 (2R)-3-phosphoglycerate + 2 H(+) = D-ribulose 1,5-bisphosphate + CO2 + H2O. The catalysed reaction is D-ribulose 1,5-bisphosphate + O2 = 2-phosphoglycolate + (2R)-3-phosphoglycerate + 2 H(+). RuBisCO catalyzes two reactions: the carboxylation of D-ribulose 1,5-bisphosphate, the primary event in carbon dioxide fixation, as well as the oxidative fragmentation of the pentose substrate in the photorespiration process. Both reactions occur simultaneously and in competition at the same active site. This chain is Ribulose bisphosphate carboxylase large chain, found in Cuscuta sandwichiana (Kauna'oa).